A 530-amino-acid chain; its full sequence is Proline--tRNA ligase, cytoplasmic (530 aa).

It belongs to the class-II aminoacyl-tRNA synthetase family.

The protein resides in the cytoplasm. It is found in the cytosol. It catalyses the reaction tRNA(Pro) + L-proline + ATP = L-prolyl-tRNA(Pro) + AMP + diphosphate. In terms of biological role, catalyzes the attachment of proline to tRNA(Pro) in a two-step reaction: proline is first activated by ATP to form Pro-AMP and then transferred to the acceptor end of tRNA(Pro). The chain is Proline--tRNA ligase, cytoplasmic from Arabidopsis thaliana (Mouse-ear cress).